We begin with the raw amino-acid sequence, 51 residues long: uncharacterized protein (51 aa).

This is an uncharacterized protein from Saccharomyces cerevisiae (strain ATCC 204508 / S288c) (Baker's yeast).